The primary structure comprises 210 residues: Insulin receptor (210 aa).

A Fibronectin type-III domain is found at 1–96; that stretch reads VSNSSSQIIL…SQILKELEES (96 aa). Residues Asn-3, Asn-21, and Asn-68 are each glycosylated (N-linked (GlcNAc...) asparagine). The segment at 55–78 is disordered; sequence WSPPFESEDSQKHNQSEYEDSAGE. The insulin-binding stretch occupies residues 103–111; sequence EDYLHNVVF. Residues 116–169 form a disordered region; it reads TSSGTGAEDPRPSRKRRSLGDVGNVTVAVPTVAAFPNTSSTSTPTSPEEHRPFE. Topologically, residues 133-210 are extracellular; the sequence is SLGDVGNVTV…EERCSVAAYV (78 aa). Residues 137–161 are compositionally biased toward low complexity; the sequence is VGNVTVAVPTVAAFPNTSSTSTPTS. N-linked (GlcNAc...) asparagine glycans are attached at residues Asn-139 and Asn-152. Residues Cys-195 and Cys-204 are joined by a disulfide bond.

Belongs to the protein kinase superfamily. Tyr protein kinase family. Insulin receptor subfamily. In terms of assembly, tetramer of 2 alpha and 2 beta chains linked by disulfide bonds. The alpha chains carry the insulin-binding regions, while the beta chains carry the kinase domain. Forms a hybrid receptor with IGF1R, the hybrid is a tetramer consisting of 1 alpha chain and 1 beta chain of INSR and 1 alpha chain and 1 beta chain of IGF1R. Interacts with SORBS1 but dissociates from it following insulin stimulation. Binds SH2B2. Activated form of INSR interacts (via phosphorylated Tyrosine) with the PTB/PID domains of IRS1 and SHC1. The sequences surrounding the phosphorylated NPXY motif contribute differentially to either IRS1 or SHC1 recognition. Interacts (via tyrosines in the C-terminus) with IRS2 (via PTB domain and 591-786 AA); the 591-786 would be the primary anchor of IRS2 to INSR while the PTB domain would have a stabilizing action on the interaction with INSR. Interacts with the SH2 domains of the 85 kDa regulatory subunit of PI3K (PIK3R1) in vitro, when autophosphorylated on tyrosine residues. Interacts with SOCS7. Interacts with SOCS3. Interacts with SOCS1. Interacts with CAV2 (tyrosine-phosphorylated form); the interaction is increased with 'Tyr-27'phosphorylation of CAV2. Interacts with ARRB2. Interacts with GRB10; this interaction blocks the association between IRS1/IRS2 and INSR, significantly reduces insulin-stimulated tyrosine phosphorylation of IRS1 and IRS2 and thus decreases insulin signaling. Interacts with GRB7. Interacts with PDPK1. Interacts with GRB14 (via BPS domain). Interacts (via subunit alpha) with ENPP1 (via 485-599 AA); this interaction blocks autophosphorylation. Interacts with PTPRE. Interacts with STAT5B (via SH2 domain). Interacts with PTPRF. Interacts with ATIC; ATIC together with PRKAA2/AMPK2 and HACD3/PTPLAD1 is proposed to be part of a signaling netwok regulating INSR autophosphorylation and endocytosis. Interacts with the insulin receptor SORL1; this interaction strongly increases its surface exposure, hence strengthens insulin signal reception. Interacts (tyrosine phosphorylated) with CCDC88A/GIV (via SH2-like region); binding requires autophosphorylation of the INSR C-terminal region. Interacts with GNAI3; the interaction is probably mediated by CCDC88A/GIV. Interacts with LMBRD1. Interacts (in response to insulin stimulation) with NCK1; this interaction may recruit PTPN1 to mediate INSR dephosphorylation. After being transported from the endoplasmic reticulum to the Golgi apparatus, the single glycosylated precursor is further glycosylated and then cleaved, followed by its transport to the plasma membrane. Post-translationally, autophosphorylated on tyrosine residues in response to insulin. Dephosphorylated by PTPN1, PTPRE and PTPRF. Dephosphorylated by PTPN2; down-regulates insulin-induced signaling. In terms of processing, S-nitrosylation by BLVRB inhibits the receptor tyrosine kinase, thereby inhibiting insulin signaling.

The protein localises to the cell membrane. The protein resides in the late endosome. Its subcellular location is the lysosome. The catalysed reaction is L-tyrosyl-[protein] + ATP = O-phospho-L-tyrosyl-[protein] + ADP + H(+). Its activity is regulated as follows. Activated in response to insulin. Autophosphorylation activates the kinase activity. PTPN1, PTPRE and PTPRF dephosphorylate important tyrosine residues, thereby reducing INSR activity. Inhibited by ENPP1. GRB10 and GRB14 inhibit the catalytic activity of the INSR, they block access of substrates to the activated receptor. SOCS1 and SOCS3 act as negative regulators of INSR activity, they bind to the activated INRS and interfere with the phosphorylation of INSR substrates. Its function is as follows. Receptor tyrosine kinase which mediates the pleiotropic actions of insulin. Binding of insulin leads to phosphorylation of several intracellular substrates, including, insulin receptor substrates (IRS1, 2, 3, 4), SHC, GAB1, CBL and other signaling intermediates. Each of these phosphorylated proteins serve as docking proteins for other signaling proteins that contain Src-homology-2 domains (SH2 domain) that specifically recognize different phosphotyrosine residues, including the p85 regulatory subunit of PI3K and SHP2. Phosphorylation of IRSs proteins lead to the activation of two main signaling pathways: the PI3K-AKT/PKB pathway, which is responsible for most of the metabolic actions of insulin, and the Ras-MAPK pathway, which regulates expression of some genes and cooperates with the PI3K pathway to control cell growth and differentiation. Binding of the SH2 domains of PI3K to phosphotyrosines on IRS1 leads to the activation of PI3K and the generation of phosphatidylinositol-(3, 4, 5)-triphosphate (PIP3), a lipid second messenger, which activates several PIP3-dependent serine/threonine kinases, such as PDPK1 and subsequently AKT/PKB. The net effect of this pathway is to produce a translocation of the glucose transporter SLC2A4/GLUT4 from cytoplasmic vesicles to the cell membrane to facilitate glucose transport. Moreover, upon insulin stimulation, activated AKT/PKB is responsible for: anti-apoptotic effect of insulin by inducing phosphorylation of BAD; regulates the expression of gluconeogenic and lipogenic enzymes by controlling the activity of the winged helix or forkhead (FOX) class of transcription factors. Another pathway regulated by PI3K-AKT/PKB activation is mTORC1 signaling pathway which regulates cell growth and metabolism and integrates signals from insulin. AKT mediates insulin-stimulated protein synthesis by phosphorylating TSC2 thereby activating mTORC1 pathway. The Ras/RAF/MAP2K/MAPK pathway is mainly involved in mediating cell growth, survival and cellular differentiation of insulin. Phosphorylated IRS1 recruits GRB2/SOS complex, which triggers the activation of the Ras/RAF/MAP2K/MAPK pathway. In addition to binding insulin, the insulin receptor can bind insulin-like growth factors (IGFI and IGFII). When present in a hybrid receptor with IGF1R, binds IGF1. In adipocytes, inhibits lipolysis. This is Insulin receptor (INSR) from Macaca mulatta (Rhesus macaque).